Reading from the N-terminus, the 790-residue chain is Cadherin-6 (790 aa).

The N-terminal stretch at 1 to 18 (MRTYRYFLLLFWVGQPYP) is a signal peptide. A propeptide spanning residues 19-53 (TLSTPLSKRTSGFPAKKRALELSGNSKNELNRSKR) is cleaved from the precursor. Residue N49 is glycosylated (N-linked (GlcNAc...) asparagine). Cadherin domains lie at 54-159 (SWMW…EPIF), 160-268 (TKEV…PPRF), 269-383 (PQST…PPVF), 384-486 (SKLA…DNAP), and 487-608 (EFAE…LIHP). Residues 54–615 (SWMWNQFFLL…IHPTGLSTGA (562 aa)) lie on the Extracellular side of the membrane. N255 carries N-linked (GlcNAc...) asparagine glycosylation. The disordered stretch occupies residues 259-288 (TDVNDNPPRFPQSTYQFKTPESSPPGTPIG). Over residues 269–279 (PQSTYQFKTPE) the composition is skewed to polar residues. Residues N399, N437, N455, and N536 are each glycosylated (N-linked (GlcNAc...) asparagine). The chain crosses the membrane as a helical span at residues 616 to 636 (LVAILLCIVILLVTVVLFAAL). At 637 to 790 (RRQRKKEPLI…YGGVDSDKDS (154 aa)) the chain is on the cytoplasmic side. Residues S786 and S790 each carry the phosphoserine modification.

As to expression, highly expressed in brain, cerebellum, and kidney. Lung, pancreas, and gastric mucosa show a weak expression. Also expressed in certain liver and kidney carcinomas.

The protein resides in the cell membrane. Functionally, cadherins are calcium-dependent cell adhesion proteins. They preferentially interact with themselves in a homophilic manner in connecting cells; cadherins may thus contribute to the sorting of heterogeneous cell types. In Homo sapiens (Human), this protein is Cadherin-6 (CDH6).